The following is a 370-amino-acid chain: Aspartate-semialdehyde dehydrogenase 1 (370 aa).

NADP(+) is bound by residues 9–12 (RGMV), 36–37 (TS), and glutamine 72. Arginine 101 serves as a coordination point for phosphate. The Acyl-thioester intermediate role is filled by cysteine 134. An S-cysteinyl cysteine; in inhibited form modification is found at cysteine 134. Substrate is bound at residue glutamine 161. NADP(+) is bound by residues 164–165 (SG) and proline 192. Glutamate 240 lines the substrate pocket. Lysine 243 lines the phosphate pocket. Substrate is bound at residue arginine 267. Histidine 274 (proton acceptor) is an active-site residue. An NADP(+)-binding site is contributed by glutamine 350.

Belongs to the aspartate-semialdehyde dehydrogenase family. In terms of assembly, homodimer.

The enzyme catalyses L-aspartate 4-semialdehyde + phosphate + NADP(+) = 4-phospho-L-aspartate + NADPH + H(+). It participates in amino-acid biosynthesis; L-lysine biosynthesis via DAP pathway; (S)-tetrahydrodipicolinate from L-aspartate: step 2/4. Its pathway is amino-acid biosynthesis; L-methionine biosynthesis via de novo pathway; L-homoserine from L-aspartate: step 2/3. The protein operates within amino-acid biosynthesis; L-threonine biosynthesis; L-threonine from L-aspartate: step 2/5. Inhibited by S-methyl-L-cysteine sulfoxide in vitro, via the formation of a covalently bound cysteine at the active site Cys-134. Functionally, catalyzes the NADPH-dependent formation of L-aspartate-semialdehyde (L-ASA) by the reductive dephosphorylation of L-aspartyl-4-phosphate. The chain is Aspartate-semialdehyde dehydrogenase 1 (asd1) from Vibrio cholerae serotype O1 (strain ATCC 39315 / El Tor Inaba N16961).